The primary structure comprises 1376 residues: YLP motif-containing protein 1 (1376 aa).

Disordered stretches follow at residues 1–335 (MYPN…PEED) and 511–1058 (STIP…PPGR). Over residues 14–27 (YPPPPVPPPPPPVA) the composition is skewed to pro residues. Composition is skewed to low complexity over residues 31–50 (ASPG…SSSG) and 59–80 (LAQL…LQPH). 5 stretches are compositionally biased toward pro residues: residues 81 to 93 (HLPP…PPVM), 102 to 114 (QPPP…PPGP), 148 to 158 (PESPPVPPGSY), 166 to 176 (MPPPQPPPSYY), and 184 to 204 (YLPP…PPSI). Polar residues-rich tracts occupy residues 207 to 216 (GNKTTIQQEP) and 238 to 260 (STMT…LQQR). The span at 261–271 (TKVHLPGHKKG) shows a compositional bias: basic residues. Over residues 277 to 286 (DVPEPIKEEA) the composition is skewed to basic and acidic residues. Composition is skewed to pro residues over residues 303–320 (PPLP…PPEE), 511–537 (STIP…PGMP), 545–594 (LPPP…PQGM), and 632–641 (PPSPYHPPPQ). A compositionally biased stretch (polar residues) spans 642–671 (SEQGNSKPLNKVFSSEQGLGESSSALSQSV). Lys675 carries the N6-methyllysine modification. Over residues 698–714 (RGPREQKEQLQKLKDFG) the composition is skewed to basic and acidic residues. Composition is skewed to pro residues over residues 738–753 (MYPP…PMGK), 773–796 (TRPP…PPVI), and 840–870 (PVLP…PPPV). Residue Lys886 forms a Glycyl lysine isopeptide (Lys-Gly) (interchain with G-Cter in SUMO2) linkage. Composition is skewed to basic and acidic residues over residues 896-930 (ITLR…EPYF), 937-1004 (TDHR…DRPP), 1013-1023 (GERRTYPEERM), and 1039-1058 (RVEK…PPGR). A Glycyl lysine isopeptide (Lys-Gly) (interchain with G-Cter in SUMO2) cross-link involves residue Lys943. Residues 1326 to 1333 (KKRVRWAD) are involved in interaction with PPP1CA.

As to quaternary structure, interacts with PPP1CA and NCOA5. Forms a complex with ILF2, ILF3, KHDRBS1, RBMX, NCOA5 and PPP1CA. As to expression, high level expression seen in the brain, adipose tissue, heart and kidney, with a low level expression in muscle, spleen and lung (at protein level).

Its subcellular location is the nucleus. It localises to the nucleus speckle. In terms of biological role, plays a role in the reduction of telomerase activity during differentiation of embryonic stem cells by binding to the core promoter of TERT and controlling its down-regulation. This is YLP motif-containing protein 1 (Ylpm1) from Rattus norvegicus (Rat).